Reading from the N-terminus, the 440-residue chain is Serine hydroxymethyltransferase (440 aa).

Residue 123 to 125 (GHI) participates in (6S)-5,6,7,8-tetrahydrofolate binding. Lys238 is modified (N6-(pyridoxal phosphate)lysine).

Belongs to the SHMT family. Homodimer. Pyridoxal 5'-phosphate is required as a cofactor.

It is found in the cytoplasm. It functions in the pathway amino-acid biosynthesis; glycine biosynthesis; glycine from L-serine: step 1/1. In terms of biological role, catalyzes the reversible interconversion of serine and glycine with a modified folate serving as the one-carbon carrier. Also exhibits a pteridine-independent aldolase activity toward beta-hydroxyamino acids, producing glycine and aldehydes, via a retro-aldol mechanism. The protein is Serine hydroxymethyltransferase of Nitrosopumilus maritimus (strain SCM1).